The chain runs to 422 residues: UDP-N-acetylglucosamine 1-carboxyvinyltransferase 2 (422 aa).

22–23 (KN) serves as a coordination point for phosphoenolpyruvate. R93 is a UDP-N-acetyl-alpha-D-glucosamine binding site. C117 serves as the catalytic Proton donor. At C117 the chain carries 2-(S-cysteinyl)pyruvic acid O-phosphothioketal. UDP-N-acetyl-alpha-D-glucosamine-binding positions include 122–126 (RPVDL), D308, and I330.

This sequence belongs to the EPSP synthase family. MurA subfamily.

It localises to the cytoplasm. The enzyme catalyses phosphoenolpyruvate + UDP-N-acetyl-alpha-D-glucosamine = UDP-N-acetyl-3-O-(1-carboxyvinyl)-alpha-D-glucosamine + phosphate. It functions in the pathway cell wall biogenesis; peptidoglycan biosynthesis. Cell wall formation. Adds enolpyruvyl to UDP-N-acetylglucosamine. This Legionella pneumophila (strain Lens) protein is UDP-N-acetylglucosamine 1-carboxyvinyltransferase 2.